Here is a 290-residue protein sequence, read N- to C-terminus: Eukaryotic translation initiation factor 3 subunit G (290 aa).

The segment at 1–34 (MSRLGNRAADWADDEEFDDPSALPAQQVTTNKDG) is disordered. The RRM domain occupies 210 to 288 (ATLRVTNVSE…LILRVEFAKR (79 aa)).

It belongs to the eIF-3 subunit G family. In terms of assembly, component of the eukaryotic translation initiation factor 3 (eIF-3) complex.

It is found in the cytoplasm. Functionally, RNA-binding component of the eukaryotic translation initiation factor 3 (eIF-3) complex, which is involved in protein synthesis of a specialized repertoire of mRNAs and, together with other initiation factors, stimulates binding of mRNA and methionyl-tRNAi to the 40S ribosome. The eIF-3 complex specifically targets and initiates translation of a subset of mRNAs involved in cell proliferation. This subunit can bind 18S rRNA. This is Eukaryotic translation initiation factor 3 subunit G from Neosartorya fischeri (strain ATCC 1020 / DSM 3700 / CBS 544.65 / FGSC A1164 / JCM 1740 / NRRL 181 / WB 181) (Aspergillus fischerianus).